The chain runs to 666 residues: DNA mismatch repair protein MutL (666 aa).

This sequence belongs to the DNA mismatch repair MutL/HexB family.

In terms of biological role, this protein is involved in the repair of mismatches in DNA. It is required for dam-dependent methyl-directed DNA mismatch repair. May act as a 'molecular matchmaker', a protein that promotes the formation of a stable complex between two or more DNA-binding proteins in an ATP-dependent manner without itself being part of a final effector complex. The chain is DNA mismatch repair protein MutL from Clostridium botulinum (strain Kyoto / Type A2).